The sequence spans 294 residues: Ethylene-inducing xylanase 3 (294 aa).

An N-terminal signal peptide occupies residues 1 to 19; it reads MVCFSSLFVAASAIAGVFA. Positions 31-226 constitute a GH11 domain; sequence QSTPSSQGTH…SSGSARINVA (196 aa). The active-site Nucleophile is the Glu-122. Glu-213 acts as the Proton donor in catalysis. The CBM1 domain occupies 259-294; it reads SCAARWGQCGGSGWNGATCCSAGTCQAQNQWYSQCL.

This sequence belongs to the glycosyl hydrolase 11 (cellulase G) family.

The catalysed reaction is Endohydrolysis of (1-&gt;4)-beta-D-xylosidic linkages in xylans.. It functions in the pathway glycan degradation; xylan degradation. In terms of biological role, endo-1,4-beta-xylanase involved in the hydrolysis of xylan, a major structural heterogeneous polysaccharide found in plant biomass representing the second most abundant polysaccharide in the biosphere, after cellulose. Exhibits immunity-inducing activity in Nicotiana benthamiana. Can induce strong oxidative burst, activate the expression of defense-related genes, and increase resistance against oomycete and fungal pathogens in N.benthamiana. The polypeptide is Ethylene-inducing xylanase 3 (Verticillium dahliae (strain VdLs.17 / ATCC MYA-4575 / FGSC 10137) (Verticillium wilt)).